The primary structure comprises 347 residues: Cytosolic sulfotransferase 14 (347 aa).

Residue 87–92 (KSGTTW) coordinates 3'-phosphoadenylyl sulfate. His155 acts as the Proton acceptor in catalysis. 3'-phosphoadenylyl sulfate is bound by residues Arg177, Ser185, Tyr244, and 310 to 312 (RKG).

This sequence belongs to the sulfotransferase 1 family.

Its subcellular location is the cytoplasm. Functionally, sulfotransferase that utilizes 3'-phospho-5'-adenylyl sulfate (PAPS) as sulfonate donor. Not active with 11-hydroxyjasmonate or 12-hydroxyjasmonate. The chain is Cytosolic sulfotransferase 14 (SOT14) from Arabidopsis thaliana (Mouse-ear cress).